The primary structure comprises 785 residues: Protein SEY1 (785 aa).

Residues 1-690 (MTDLEVSAIQ…KRSVINSKTE (690 aa)) are Cytoplasmic-facing. The GB1/RHD3-type G domain occupies 40 to 266 (GLNYHIVSVF…SEDQLFNEGY (227 aa)). 50-57 (GSQSTGKS) contributes to the GTP binding site. Residues 451 to 479 (PKLRELEEELSNLRTELVNKEQENIKTKI) are a coiled coil. Residues 691–711 (VPLYIYALLLVLGWNEFMIIL) form a helical membrane-spanning segment. The Lumenal segment spans residues 712 to 714 (RNP). A helical transmembrane segment spans residues 715–735 (LLITLLLIGLTGLYLGYKTKL). At 736 to 785 (LGPIVQVVQAMIQELQDQAKNKLRDVLVSEPEAPSQVRIGKEVDATKDED) the chain is on the cytoplasmic side.

The protein belongs to the TRAFAC class dynamin-like GTPase superfamily. GB1/RHD3 GTPase family. RHD3 subfamily.

The protein localises to the endoplasmic reticulum membrane. Functionally, cooperates with the reticulon proteins and tubule-shaping DP1 family proteins to generate and maintain the structure of the tubular endoplasmic reticulum network. Has GTPase activity, which is required for its function in ER organization. This Komagataella phaffii (strain GS115 / ATCC 20864) (Yeast) protein is Protein SEY1.